The chain runs to 428 residues: Enolase (428 aa).

(2R)-2-phosphoglycerate is bound at residue Q162. E204 serves as the catalytic Proton donor. Mg(2+)-binding residues include D241, E283, and D310. Positions 335, 364, 365, and 386 each coordinate (2R)-2-phosphoglycerate. K335 (proton acceptor) is an active-site residue.

It belongs to the enolase family. It depends on Mg(2+) as a cofactor.

The protein resides in the cytoplasm. Its subcellular location is the secreted. It localises to the cell surface. It catalyses the reaction (2R)-2-phosphoglycerate = phosphoenolpyruvate + H2O. Its pathway is carbohydrate degradation; glycolysis; pyruvate from D-glyceraldehyde 3-phosphate: step 4/5. Catalyzes the reversible conversion of 2-phosphoglycerate (2-PG) into phosphoenolpyruvate (PEP). It is essential for the degradation of carbohydrates via glycolysis. The protein is Enolase of Rhodococcus opacus (strain B4).